We begin with the raw amino-acid sequence, 432 residues long: Polyamine export protein (432 aa).

In terms of domain architecture, CNNM transmembrane spans 1-201 (MIMELFHTIL…AEAGVLKTQE (201 aa)). Transmembrane regions (helical) follow at residues 2–22 (IMELFHTILAIVALILSSAVV), 61–81 (FITVVQILLNMVAILGGGIGE), 100–120 (WIAPTASTIAFILVTCLFILF), and 138–158 (LSVVGIMNFSMYVFKPLVWFF). CBS domains follow at residues 220–279 (MTTR…NENV) and 286–345 (LLRK…SNEE).

The protein belongs to the UPF0053 family. PaeA subfamily.

The protein localises to the cell inner membrane. Involved in cadaverine and putrescine tolerance in stationary phase. May facilitate the efflux of both cadaverine and putrescine from the cytoplasm, reducing potentially toxic levels under certain stress conditions. The polypeptide is Polyamine export protein (Haemophilus influenzae (strain ATCC 51907 / DSM 11121 / KW20 / Rd)).